A 95-amino-acid chain; its full sequence is MKLLMVLMLAALLLHCYADSGCKLLEDMVEKTINSDISIPEYKELLQEFIDSDAAAEAMGKFKQCFLNQSHRTLKNFGLMMHTVYDSIWCNMKSN.

A signal peptide spans 1-18 (MKLLMVLMLAALLLHCYA). A glycan (N-linked (GlcNAc...) asparagine) is linked at Asn-68.

Heterodimer of a lipophilin A and a lipophilin C (mammaglobin B) monomer associated head to head. In terms of tissue distribution, expressed in thymus, trachea, kidney, steroid responsive tissues (prostate, testis, uterus, breast and ovary) and salivary gland.

It is found in the secreted. Its function is as follows. May bind androgens and other steroids, may also bind estramustine, a chemotherapeutic agent used for prostate cancer. May be under transcriptional regulation of steroid hormones. In Homo sapiens (Human), this protein is Mammaglobin-B (SCGB2A1).